A 427-amino-acid polypeptide reads, in one-letter code: Enolase (427 aa).

Q163 is a (2R)-2-phosphoglycerate binding site. E205 serves as the catalytic Proton donor. Residues D242, E285, and D312 each coordinate Mg(2+). Residues K337, R366, S367, and K388 each contribute to the (2R)-2-phosphoglycerate site. Catalysis depends on K337, which acts as the Proton acceptor.

It belongs to the enolase family. It depends on Mg(2+) as a cofactor.

The protein resides in the cytoplasm. Its subcellular location is the secreted. The protein localises to the cell surface. The enzyme catalyses (2R)-2-phosphoglycerate = phosphoenolpyruvate + H2O. It participates in carbohydrate degradation; glycolysis; pyruvate from D-glyceraldehyde 3-phosphate: step 4/5. Functionally, catalyzes the reversible conversion of 2-phosphoglycerate (2-PG) into phosphoenolpyruvate (PEP). It is essential for the degradation of carbohydrates via glycolysis. The chain is Enolase from Leptothrix cholodnii (strain ATCC 51168 / LMG 8142 / SP-6) (Leptothrix discophora (strain SP-6)).